The chain runs to 151 residues: 3-dehydroquinate dehydratase 1 (151 aa).

Catalysis depends on Tyr-24, which acts as the Proton acceptor. The substrate site is built by Asn-75, His-81, and Asp-88. His-101 functions as the Proton donor in the catalytic mechanism. Residues 102–103 (IS) and Arg-112 each bind substrate.

Belongs to the type-II 3-dehydroquinase family. As to quaternary structure, homododecamer.

It carries out the reaction 3-dehydroquinate = 3-dehydroshikimate + H2O. It participates in metabolic intermediate biosynthesis; chorismate biosynthesis; chorismate from D-erythrose 4-phosphate and phosphoenolpyruvate: step 3/7. In terms of biological role, catalyzes a trans-dehydration via an enolate intermediate. This is 3-dehydroquinate dehydratase 1 (aroQ1) from Corynebacterium efficiens (strain DSM 44549 / YS-314 / AJ 12310 / JCM 11189 / NBRC 100395).